Reading from the N-terminus, the 245-residue chain is Probable phosphatase YcdX (245 aa).

Positions 7, 9, 15, 40, 73, 101, 131, 192, and 194 each coordinate Zn(2+).

It belongs to the PHP family. As to quaternary structure, homotrimer. Requires Zn(2+) as cofactor.

The chain is Probable phosphatase YcdX from Escherichia coli O139:H28 (strain E24377A / ETEC).